The following is a 292-amino-acid chain: Phosphoenolpyruvate guanylyltransferase (292 aa).

Residues threonine 168, glycine 184, and serine 187 each coordinate phosphoenolpyruvate. The segment at 243-292 is disordered; sequence PLVAEDSGGSGGESGTSAESGLSVPPGIVGGTQRRIVSDASGPGRAKKYP.

Belongs to the CofC family.

It carries out the reaction phosphoenolpyruvate + GTP + H(+) = enolpyruvoyl-2-diphospho-5'-guanosine + diphosphate. The protein operates within cofactor biosynthesis; coenzyme F420 biosynthesis. Its function is as follows. Guanylyltransferase that catalyzes the activation of phosphoenolpyruvate (PEP) as enolpyruvoyl-2-diphospho-5'-guanosine, via the condensation of PEP with GTP. It is involved in the biosynthesis of coenzyme F420, a hydride carrier cofactor. This is Phosphoenolpyruvate guanylyltransferase from Frankia casuarinae (strain DSM 45818 / CECT 9043 / HFP020203 / CcI3).